A 285-amino-acid chain; its full sequence is Phycobilisome 31.6 kDa linker polypeptide, phycocyanin-associated, rod (285 aa).

In terms of domain architecture, PBS-linker spans 1–180; that stretch reads MPITTAASRL…LYRGYATSDR (180 aa).

Belongs to the phycobilisome linker protein family.

The protein resides in the cellular thylakoid membrane. Functionally, rod linker protein, associated with phycocyanin. Linker polypeptides determine the state of aggregation and the location of the disk-shaped phycobiliprotein units within the phycobilisome and modulate their spectroscopic properties in order to mediate a directed and optimal energy transfer. The chain is Phycobilisome 31.6 kDa linker polypeptide, phycocyanin-associated, rod (cpcI3) from Microchaete diplosiphon (Fremyella diplosiphon).